The following is a 21-amino-acid chain: Snake venom serine protease jerdonase (21 aa).

A Peptidase S1 domain is found at 1–21 (IIGGDECNINEHPFLVALYDA).

Belongs to the peptidase S1 family. Snake venom subfamily. In terms of assembly, monomer. Glycosylated; contains 35.8% neutral carbohydrate. In terms of tissue distribution, expressed by the venom gland.

The protein localises to the secreted. With respect to regulation, inhibited by PMSF and soybean trypsin inhibitor. Partially inhibited by L-cysteine and DTT. Not affected by EDTA. Functionally, multifunctional venom serine protease that has fibrino(geno)lytic activity towards the A alpha-chain of human fibrinogen (FGA) and a slow activity towards the B beta-chain (FGB). Also hydrolyzes bovine low-molecular-mass kininogen and releases bradykinin. Catalyzes the hydrolysis of BAEE, S-2238 and S-2302. In Protobothrops jerdonii (Jerdon's pitviper), this protein is Snake venom serine protease jerdonase.